Reading from the N-terminus, the 379-residue chain is ATP phosphoribosyltransferase regulatory subunit (379 aa).

It belongs to the class-II aminoacyl-tRNA synthetase family. HisZ subfamily. As to quaternary structure, heteromultimer composed of HisG and HisZ subunits.

It is found in the cytoplasm. The protein operates within amino-acid biosynthesis; L-histidine biosynthesis; L-histidine from 5-phospho-alpha-D-ribose 1-diphosphate: step 1/9. In terms of biological role, required for the first step of histidine biosynthesis. May allow the feedback regulation of ATP phosphoribosyltransferase activity by histidine. The protein is ATP phosphoribosyltransferase regulatory subunit of Caldanaerobacter subterraneus subsp. tengcongensis (strain DSM 15242 / JCM 11007 / NBRC 100824 / MB4) (Thermoanaerobacter tengcongensis).